A 442-amino-acid polypeptide reads, in one-letter code: Proline--tRNA ligase (442 aa).

It belongs to the class-II aminoacyl-tRNA synthetase family. ProS type 2 subfamily. Homodimer.

It is found in the cytoplasm. The enzyme catalyses tRNA(Pro) + L-proline + ATP = L-prolyl-tRNA(Pro) + AMP + diphosphate. Its function is as follows. Catalyzes the attachment of proline to tRNA(Pro) in a two-step reaction: proline is first activated by ATP to form Pro-AMP and then transferred to the acceptor end of tRNA(Pro). The chain is Proline--tRNA ligase from Brucella anthropi (strain ATCC 49188 / DSM 6882 / CCUG 24695 / JCM 21032 / LMG 3331 / NBRC 15819 / NCTC 12168 / Alc 37) (Ochrobactrum anthropi).